Consider the following 1413-residue polypeptide: Alpha-latrocrustotoxin-Lt1a (1413 aa).

Residues 1 to 28 (VSIFIFHFSANILVRNSEMKGKRVISKR) constitute a propeptide that is removed on maturation. Residues 238 to 257 (ALFALFYGTQTFISIMFYLV) are helix H8 is the probable transmembrane region of the tetrameric pore inserted in the target cell membrane. ANK repeat units follow at residues 457–490 (DIHR…QVGA), 494–524 (MGRK…LLNV), 528–557 (NGYT…DVNV), 562–592 (NELT…DVNA), 596–625 (AGFT…GINI), 629–658 (SGLT…KVKL), 664–694 (NGMT…DVNA), 699–729 (KNWT…DIST), 733–762 (QAIT…VVDQ), 766–795 (NGFT…NINA), 799–828 (DGST…NIKA), 832–861 (INQM…SLMN), 866–895 (RDEY…DVNE), 899–928 (DGNT…DFRL), 965–995 (RGKT…TLNE), 996–1026 (DQCS…NPTA), 1031–1072 (NQVS…DINK), 1077–1106 (QQST…DPNK), 1109–1139 (RGDP…DVNT), and 1143–1172 (EQFT…DVNA). Residues 1193-1413 (RSLGRRFFRN…NRPTNVLQIK (221 aa)) constitute a propeptide that is removed on maturation.

Belongs to the cationic peptide 01 (latrotoxin) family. 01 (alpha-latrocrustotoxin) subfamily. In terms of assembly, homotetramer in membranes. In terms of tissue distribution, expressed by the venom gland.

It localises to the secreted. The protein localises to the target cell membrane. In terms of biological role, crustacean-selective presynaptic neurotoxin that induces neurotransmitter exocytosis. May bind to crustacean neurexin-1 homolog, adhesion G protein-coupled receptor L1 homolog, and receptor-type tyrosine-protein phosphatase S homolog, and induces neurotransmitter exocytosis both by forming tetrameric pores in membranes and signaling via G protein-coupled receptor. This recombinant protein form channels in artificial membrane bilayers, that are stabilized by calcium ions and allow calcium flux at negative membrane potentials. This is Alpha-latrocrustotoxin-Lt1a from Latrodectus tredecimguttatus (Mediterranean black widow spider).